Consider the following 307-residue polypeptide: Protein FAM76A (307 aa).

Disordered stretches follow at residues 161–181 and 287–307; these read SRLSSGSHYNSQKTLSTSSIQ and KQAAALSKGKKPEKSGAITSP. The stretch at 217–297 forms a coiled coil; it reads IIAQLKEEVA…QAAALSKGKK (81 aa).

Belongs to the FAM76 family.

The chain is Protein FAM76A (FAM76A) from Gallus gallus (Chicken).